The primary structure comprises 921 residues: Leucine--tRNA ligase (921 aa).

The short motif at 80–90 is the 'HIGH' region element; the sequence is PYPSGKLHMGH. Positions 667-671 match the 'KMSKS' region motif; it reads KMSKS. Lys670 provides a ligand contact to ATP.

This sequence belongs to the class-I aminoacyl-tRNA synthetase family.

It localises to the cytoplasm. The enzyme catalyses tRNA(Leu) + L-leucine + ATP = L-leucyl-tRNA(Leu) + AMP + diphosphate. The sequence is that of Leucine--tRNA ligase from Psychrobacter arcticus (strain DSM 17307 / VKM B-2377 / 273-4).